The sequence spans 135 residues: Class I hydrophobin 15 (135 aa).

Residues Met-1–Ala-21 form the signal peptide. 4 disulfide bridges follow: Cys-50–Cys-113, Cys-57–Cys-107, Cys-58–Cys-97, and Cys-114–Cys-127. Asn-131 carries N-linked (GlcNAc...) asparagine glycosylation.

This sequence belongs to the fungal hydrophobin family. As to quaternary structure, self-assembles to form functional amyloid fibrils called rodlets. Self-assembly into fibrillar rodlets occurs spontaneously at hydrophobic:hydrophilic interfaces and the rodlets further associate laterally to form amphipathic monolayers.

It localises to the secreted. It is found in the cell wall. Aerial growth, conidiation, and dispersal of filamentous fungi in the environment rely upon a capability of their secreting small amphipathic proteins called hydrophobins (HPBs) with low sequence identity. Class I can self-assemble into an outermost layer of rodlet bundles on aerial cell surfaces, conferring cellular hydrophobicity that supports fungal growth, development and dispersal; whereas Class II form highly ordered films at water-air interfaces through intermolecular interactions but contribute nothing to the rodlet structure. The polypeptide is Class I hydrophobin 15 (Pleurotus ostreatus (strain PC15) (Oyster mushroom)).